Reading from the N-terminus, the 178-residue chain is Interleukin-17B (178 aa).

The first 22 residues, 1 to 22, serve as a signal peptide directing secretion; that stretch reads MDWPHSLLFLLAISIFLGPSQP. Positions 21-44 are disordered; sequence QPRNTKGKRKGQVRPGPLAPGPHQ. Asn75 carries an N-linked (GlcNAc...) asparagine glycan. Cystine bridges form between Cys121–Cys176 and Cys126–Cys178.

The protein belongs to the IL-17 family.

Its subcellular location is the secreted. Its function is as follows. Stimulates the release of tumor necrosis factor alpha and IL-1-beta from the monocytic cell line THP-1. The protein is Interleukin-17B (IL17B) of Mesocricetus auratus (Golden hamster).